An 83-amino-acid polypeptide reads, in one-letter code: Exodeoxyribonuclease 7 small subunit (83 aa).

It belongs to the XseB family. Heterooligomer composed of large and small subunits.

The protein localises to the cytoplasm. It carries out the reaction Exonucleolytic cleavage in either 5'- to 3'- or 3'- to 5'-direction to yield nucleoside 5'-phosphates.. Bidirectionally degrades single-stranded DNA into large acid-insoluble oligonucleotides, which are then degraded further into small acid-soluble oligonucleotides. This chain is Exodeoxyribonuclease 7 small subunit, found in Moorella thermoacetica (strain ATCC 39073 / JCM 9320).